A 314-amino-acid polypeptide reads, in one-letter code: Putative thiamine biosynthesis protein HI_0357 (314 aa).

Belongs to the NMT1/THI5 family.

Its function is as follows. Probably involved in thiamine biosynthesis. In Haemophilus influenzae (strain ATCC 51907 / DSM 11121 / KW20 / Rd), this protein is Putative thiamine biosynthesis protein HI_0357.